We begin with the raw amino-acid sequence, 215 residues long: MKALLLGAPGAGKGTQAQFITAAFGIPQISTGDMLRAAIKAGTPLGLEAKKIIDEGGLVRDDIIIGMVKERIAQDDCKNGFLFDGFPRTLAQAEAMVEAGVDLDAVVEIDVPDSVIVDRMSGRRVHLASGRTYHVTYNPPKVEGKDDVTGEDLIQRDDDKEETVKKRLAVYHEQTEVLVDFYSKLEGEHAPKYIKVDGTQAVEAVKAEVLGALGK.

10–15 contacts ATP; it reads GAGKGT. The interval 30–59 is NMP; it reads STGDMLRAAIKAGTPLGLEAKKIIDEGGLV. AMP-binding positions include Thr-31, Arg-36, 57–59, 85–88, and Gln-92; these read GLV and GFPR. Residues 122-159 are LID; it reads GRRVHLASGRTYHVTYNPPKVEGKDDVTGEDLIQRDDD. ATP is bound by residues Arg-123 and 132–133; that span reads TY. AMP is bound by residues Arg-156 and Arg-167. Gln-200 contacts ATP.

This sequence belongs to the adenylate kinase family. In terms of assembly, monomer.

Its subcellular location is the cytoplasm. It carries out the reaction AMP + ATP = 2 ADP. Its pathway is purine metabolism; AMP biosynthesis via salvage pathway; AMP from ADP: step 1/1. In terms of biological role, catalyzes the reversible transfer of the terminal phosphate group between ATP and AMP. Plays an important role in cellular energy homeostasis and in adenine nucleotide metabolism. The polypeptide is Adenylate kinase (Neisseria meningitidis serogroup B (strain ATCC BAA-335 / MC58)).